We begin with the raw amino-acid sequence, 586 residues long: Alpha-1,2-mannosyltransferase MNN5 (586 aa).

An N-terminal signal peptide occupies residues 1 to 29 (MLIRLKKRKILQVIVSAVVLILFFCSVHN). N-linked (GlcNAc...) asparagine glycosylation is found at Asn113, Asn136, Asn259, and Asn264.

Belongs to the MNN1/MNT family. As to quaternary structure, interacts with SVP26. Post-translationally, glycosylated.

The protein localises to the golgi apparatus. The protein resides in the cis-Golgi network. It functions in the pathway protein modification; protein glycosylation. Responsible for addition of first and second mannose residues to the outer chain of core N-linked polysaccharides and to O-linked mannotriose. Implicated in late Golgi modifications. The chain is Alpha-1,2-mannosyltransferase MNN5 (MNN5) from Saccharomyces cerevisiae (strain ATCC 204508 / S288c) (Baker's yeast).